A 120-amino-acid chain; its full sequence is Large ribosomal subunit protein eL18 (120 aa).

It belongs to the eukaryotic ribosomal protein eL18 family. Part of the 50S ribosomal subunit.

The chain is Large ribosomal subunit protein eL18 from Pyrococcus furiosus (strain ATCC 43587 / DSM 3638 / JCM 8422 / Vc1).